Here is a 243-residue protein sequence, read N- to C-terminus: Uridylate kinase (243 aa).

15 to 18 is an ATP binding site; it reads KISG. A UMP-binding site is contributed by Gly57. Residues Gly58 and Arg62 each contribute to the ATP site. UMP-binding positions include Asp77 and 138-145; that span reads TGNPFFTT. ATP-binding residues include Thr165, Phe171, and Asp174.

This sequence belongs to the UMP kinase family. In terms of assembly, homohexamer.

The protein resides in the cytoplasm. The catalysed reaction is UMP + ATP = UDP + ADP. It participates in pyrimidine metabolism; CTP biosynthesis via de novo pathway; UDP from UMP (UMPK route): step 1/1. With respect to regulation, inhibited by UTP. Functionally, catalyzes the reversible phosphorylation of UMP to UDP. The polypeptide is Uridylate kinase (Blochmanniella floridana).